A 321-amino-acid chain; its full sequence is Peptide transport system permease protein SapB (321 aa).

The next 8 membrane-spanning stretches (helical) occupy residues 8–28 (HILW…VILL), 41–61 (IYIG…GITY), 82–102 (CFIT…ISAV), 117–137 (YVGL…VAAL), 150–170 (LLYE…FMEV), 180–200 (ILQH…MEII), 249–269 (VFTL…WPGI), and 289–309 (VIVI…FTFI). One can recognise an ABC transmembrane type-1 domain in the interval 75–303 (LPPTLELCFI…VCIILIDTFT (229 aa)).

Belongs to the binding-protein-dependent transport system permease family. OppBC subfamily.

It localises to the cell inner membrane. Involved in a peptide intake transport system that plays a role in the resistance to antimicrobial peptides. This chain is Peptide transport system permease protein SapB (sapB), found in Haemophilus influenzae (strain ATCC 51907 / DSM 11121 / KW20 / Rd).